Consider the following 424-residue polypeptide: Serine--tRNA ligase (424 aa).

231–233 contributes to the L-serine binding site; it reads TAE. Residue 262–264 participates in ATP binding; it reads RSE. Glu-285 is an L-serine binding site. 349–352 is an ATP binding site; sequence EISS. Ser-385 provides a ligand contact to L-serine.

The protein belongs to the class-II aminoacyl-tRNA synthetase family. Type-1 seryl-tRNA synthetase subfamily. Homodimer. The tRNA molecule binds across the dimer.

It is found in the cytoplasm. The catalysed reaction is tRNA(Ser) + L-serine + ATP = L-seryl-tRNA(Ser) + AMP + diphosphate + H(+). It catalyses the reaction tRNA(Sec) + L-serine + ATP = L-seryl-tRNA(Sec) + AMP + diphosphate + H(+). Its pathway is aminoacyl-tRNA biosynthesis; selenocysteinyl-tRNA(Sec) biosynthesis; L-seryl-tRNA(Sec) from L-serine and tRNA(Sec): step 1/1. Its function is as follows. Catalyzes the attachment of serine to tRNA(Ser). Is also able to aminoacylate tRNA(Sec) with serine, to form the misacylated tRNA L-seryl-tRNA(Sec), which will be further converted into selenocysteinyl-tRNA(Sec). This Bacillus cereus (strain G9842) protein is Serine--tRNA ligase.